We begin with the raw amino-acid sequence, 88 residues long: Small ribosomal subunit protein bS20 (88 aa).

Positions 1-27 (MANSKSAKKRALQSEKRRQHNASRRSM) are disordered.

It belongs to the bacterial ribosomal protein bS20 family.

Functionally, binds directly to 16S ribosomal RNA. In Shewanella putrefaciens (strain CN-32 / ATCC BAA-453), this protein is Small ribosomal subunit protein bS20.